Consider the following 881-residue polypeptide: Lon protease (881 aa).

Positions 1-24 (MAKNTDIEHDAHEPAGHGDVRESA) are enriched in basic and acidic residues. The disordered stretch occupies residues 1 to 77 (MAKNTDIEHD…RAGEAEKGVP (77 aa)). Residues 49-59 (QTDTESAQGAA) are compositionally biased toward polar residues. Basic and acidic residues predominate over residues 65–77 (EVQRAGEAEKGVP). In terms of domain architecture, Lon N-terminal spans 94–287 (VHLIPLTGRP…EVFVYIKKEK (194 aa)). 440–447 (GPPGVGKT) provides a ligand contact to ATP. A Lon proteolytic domain is found at 679 to 861 (ANKVGTAVGL…EEVLSLAFPK (183 aa)). Catalysis depends on residues Ser767 and Lys810.

Belongs to the peptidase S16 family. As to quaternary structure, homohexamer. Organized in a ring with a central cavity.

Its subcellular location is the cytoplasm. It catalyses the reaction Hydrolysis of proteins in presence of ATP.. Functionally, ATP-dependent serine protease that mediates the selective degradation of mutant and abnormal proteins as well as certain short-lived regulatory proteins. Required for cellular homeostasis and for survival from DNA damage and developmental changes induced by stress. Degrades polypeptides processively to yield small peptide fragments that are 5 to 10 amino acids long. Binds to DNA in a double-stranded, site-specific manner. The sequence is that of Lon protease from Treponema pallidum (strain Nichols).